We begin with the raw amino-acid sequence, 884 residues long: Alanine--tRNA ligase (884 aa).

Positions 562, 566, 674, and 678 each coordinate Zn(2+).

Belongs to the class-II aminoacyl-tRNA synthetase family. Requires Zn(2+) as cofactor.

It is found in the cytoplasm. The enzyme catalyses tRNA(Ala) + L-alanine + ATP = L-alanyl-tRNA(Ala) + AMP + diphosphate. Catalyzes the attachment of alanine to tRNA(Ala) in a two-step reaction: alanine is first activated by ATP to form Ala-AMP and then transferred to the acceptor end of tRNA(Ala). Also edits incorrectly charged Ser-tRNA(Ala) and Gly-tRNA(Ala) via its editing domain. The chain is Alanine--tRNA ligase from Rhizobium etli (strain ATCC 51251 / DSM 11541 / JCM 21823 / NBRC 15573 / CFN 42).